The following is a 114-amino-acid chain: MGIDIKNNTFFLISLGAFLGALFRWQIDEIFIVNLIGCFLLGFFNSLNILKRYKLTLCVGLCGSMTTFSSWMSHLYKLLNQGLYKLFLLNSLSIVLMGVLSIALGHIFAKRLNA.

The next 4 membrane-spanning stretches (helical) occupy residues 3–23 (IDIKNNTFFLISLGAFLGALF), 30–50 (IFIVNLIGCFLLGFFNSLNIL), 55–75 (LTLCVGLCGSMTTFSSWMSHL), and 87–107 (FLLNSLSIVLMGVLSIALGHI). Residues G63 and T66 each contribute to the Na(+) site.

The protein belongs to the fluoride channel Fluc/FEX (TC 1.A.43) family.

The protein resides in the cell inner membrane. The enzyme catalyses fluoride(in) = fluoride(out). With respect to regulation, na(+) is not transported, but it plays an essential structural role and its presence is essential for fluoride channel function. Functionally, fluoride-specific ion channel. Important for reducing fluoride concentration in the cell, thus reducing its toxicity. The chain is Fluoride-specific ion channel FluC 1 from Prochlorococcus marinus (strain NATL2A).